We begin with the raw amino-acid sequence, 233 residues long: Ribosome maturation protein SDO1 homolog (233 aa).

It belongs to the SDO1/SBDS family.

The protein is Ribosome maturation protein SDO1 homolog of Aeropyrum pernix (strain ATCC 700893 / DSM 11879 / JCM 9820 / NBRC 100138 / K1).